Consider the following 197-residue polypeptide: MIDFDGYRPNVGIVICNRKGQVLWAKRYGQNSWQYPQGGINDGETPEQAMYRELYEEVGLTRRDVRIVYASKQWLRYKLPKRLLRYDSKPMCIGQKQRWFLVQLMSDEKNINMNCSKSPEFDGWRWVSFWYPVRQVVSFKRDVYRKAMKEFACFLFDANKTVNPLSTNNNDEKKANYSAKKPYSPYRNQDKKRKTRV.

Residues 6–149 enclose the Nudix hydrolase domain; the sequence is GYRPNVGIVI…KRDVYRKAMK (144 aa). The Nudix box signature appears at 38-59; sequence GGINDGETPEQAMYRELYEEVG. Residues 165–197 are disordered; the sequence is LSTNNNDEKKANYSAKKPYSPYRNQDKKRKTRV.

Belongs to the Nudix hydrolase family. RppH subfamily. A divalent metal cation serves as cofactor.

In terms of biological role, accelerates the degradation of transcripts by removing pyrophosphate from the 5'-end of triphosphorylated RNA, leading to a more labile monophosphorylated state that can stimulate subsequent ribonuclease cleavage. This Mannheimia succiniciproducens (strain KCTC 0769BP / MBEL55E) protein is RNA pyrophosphohydrolase.